We begin with the raw amino-acid sequence, 330 residues long: Methionyl-tRNA formyltransferase (330 aa).

116 to 119 (SLLP) is a binding site for (6S)-5,6,7,8-tetrahydrofolate.

This sequence belongs to the Fmt family.

It catalyses the reaction L-methionyl-tRNA(fMet) + (6R)-10-formyltetrahydrofolate = N-formyl-L-methionyl-tRNA(fMet) + (6S)-5,6,7,8-tetrahydrofolate + H(+). Attaches a formyl group to the free amino group of methionyl-tRNA(fMet). The formyl group appears to play a dual role in the initiator identity of N-formylmethionyl-tRNA by promoting its recognition by IF2 and preventing the misappropriation of this tRNA by the elongation apparatus. The chain is Methionyl-tRNA formyltransferase from Nitratidesulfovibrio vulgaris (strain DP4) (Desulfovibrio vulgaris).